Consider the following 186-residue polypeptide: UPF0200 protein PF1294 (186 aa).

7 to 14 lines the ATP pocket; sequence GMPGSGKG.

Belongs to the UPF0200 family.

In Pyrococcus furiosus (strain ATCC 43587 / DSM 3638 / JCM 8422 / Vc1), this protein is UPF0200 protein PF1294.